The following is a 221-amino-acid chain: MGLDNFTAPSTGTTPAGSPFLRMDQSSAGKYPDLPPSISDTTNFRIKKIMDDAKMLEEEIKFRKSIYKKYGRFSSVTDGIEYTLIMADIVLGTVATAIPGVGSLVSAATFSGVGLISGVAKMIQAKLMAKKMKNYRLAIVATTTLANLNRKISKAISDGQITHEEFEDIQNTVVEWKNGLQVVGKQPTLSRETIELLSQQATEKAQKDLLDQLKNMNLGKM.

Positions 1–22 (MGLDNFTAPSTGTTPAGSPFLR) are disordered. The span at 7 to 16 (TAPSTGTTPA) shows a compositional bias: polar residues.

Belongs to the IIV-6 259R family.

This is an uncharacterized protein from Invertebrate iridescent virus 3 (IIV-3).